Consider the following 417-residue polypeptide: Serine hydroxymethyltransferase (417 aa).

Residues Leu112 and 116 to 118 contribute to the (6S)-5,6,7,8-tetrahydrofolate site; that span reads GHL. Lys221 bears the N6-(pyridoxal phosphate)lysine mark. Glu247 is a binding site for (6S)-5,6,7,8-tetrahydrofolate.

It belongs to the SHMT family. In terms of assembly, homodimer. Requires pyridoxal 5'-phosphate as cofactor.

The protein localises to the cytoplasm. It catalyses the reaction (6R)-5,10-methylene-5,6,7,8-tetrahydrofolate + glycine + H2O = (6S)-5,6,7,8-tetrahydrofolate + L-serine. It functions in the pathway one-carbon metabolism; tetrahydrofolate interconversion. Its pathway is amino-acid biosynthesis; glycine biosynthesis; glycine from L-serine: step 1/1. Its function is as follows. Catalyzes the reversible interconversion of serine and glycine with tetrahydrofolate (THF) serving as the one-carbon carrier. This reaction serves as the major source of one-carbon groups required for the biosynthesis of purines, thymidylate, methionine, and other important biomolecules. Also exhibits THF-independent aldolase activity toward beta-hydroxyamino acids, producing glycine and aldehydes, via a retro-aldol mechanism. In Borreliella afzelii (strain PKo) (Borrelia afzelii), this protein is Serine hydroxymethyltransferase.